A 592-amino-acid chain; its full sequence is Aspartate--tRNA(Asp/Asn) ligase (592 aa).

Residue E175 participates in L-aspartate binding. Positions 199 to 202 (QLFK) are aspartate. R221 is a binding site for L-aspartate. ATP-binding positions include 221–223 (RDE) and Q230. An L-aspartate-binding site is contributed by H450. E483 is a binding site for ATP. Residue R490 participates in L-aspartate binding. Position 535 to 538 (535 to 538 (GLDR)) interacts with ATP.

This sequence belongs to the class-II aminoacyl-tRNA synthetase family. Type 1 subfamily. Homodimer.

It localises to the cytoplasm. The enzyme catalyses tRNA(Asx) + L-aspartate + ATP = L-aspartyl-tRNA(Asx) + AMP + diphosphate. In terms of biological role, aspartyl-tRNA synthetase with relaxed tRNA specificity since it is able to aspartylate not only its cognate tRNA(Asp) but also tRNA(Asn). Reaction proceeds in two steps: L-aspartate is first activated by ATP to form Asp-AMP and then transferred to the acceptor end of tRNA(Asp/Asn). In Acinetobacter baumannii (strain AB307-0294), this protein is Aspartate--tRNA(Asp/Asn) ligase.